The sequence spans 126 residues: Glycine cleavage system H protein (126 aa).

Residues 22 to 103 (KAYIGITDYA…PYGSWMALVE (82 aa)) enclose the Lipoyl-binding domain. Lys-63 bears the N6-lipoyllysine mark.

This sequence belongs to the GcvH family. The glycine cleavage system is composed of four proteins: P, T, L and H. The cofactor is (R)-lipoate.

Its function is as follows. The glycine cleavage system catalyzes the degradation of glycine. The H protein shuttles the methylamine group of glycine from the P protein to the T protein. The sequence is that of Glycine cleavage system H protein from Thermoanaerobacter sp. (strain X514).